The following is a 203-amino-acid chain: Glycerol-3-phosphate acyltransferase (203 aa).

Helical transmembrane passes span 5 to 25 (IASIALVLLAYLSGSIPFSLL), 50 to 70 (TCGFSAFALAMGGDMLKGALP), 72 to 92 (IAAQALGLSPLAVVIVGTAAM), 115 to 135 (VVLTLAPLVALPGLAAWAVTF), 140 to 160 (ISAVASLTAAAVCGIAAAVLL), and 162 to 182 (LGMLPPAYAIFVWGAVAAIVF).

The protein belongs to the PlsY family. In terms of assembly, probably interacts with PlsX.

It localises to the cell membrane. It catalyses the reaction an acyl phosphate + sn-glycerol 3-phosphate = a 1-acyl-sn-glycero-3-phosphate + phosphate. The protein operates within lipid metabolism; phospholipid metabolism. Its function is as follows. Catalyzes the transfer of an acyl group from acyl-phosphate (acyl-PO(4)) to glycerol-3-phosphate (G3P) to form lysophosphatidic acid (LPA). This enzyme utilizes acyl-phosphate as fatty acyl donor, but not acyl-CoA or acyl-ACP. This is Glycerol-3-phosphate acyltransferase from Roseiflexus sp. (strain RS-1).